A 257-amino-acid chain; its full sequence is Beta-fibrinogenase mucrofibrase-5 (257 aa).

A signal peptide spans 1 to 18 (MVLIRVLANLLILQLSYA). The propeptide occupies 19 to 24 (QKSSEL). The region spanning 25–248 (IIGGDECNIN…HLDWIKGIIA (224 aa)) is the Peptidase S1 domain. 6 cysteine pairs are disulfide-bonded: Cys31–Cys162, Cys49–Cys65, Cys97–Cys255, Cys141–Cys209, Cys173–Cys188, and Cys199–Cys224. His64 acts as the Charge relay system in catalysis. Asn102 carries N-linked (GlcNAc...) asparagine glycosylation. Residue Asp109 is the Charge relay system of the active site. The active-site Charge relay system is Ser203.

Belongs to the peptidase S1 family. Snake venom subfamily. In terms of assembly, monomer. As to expression, expressed by the venom gland.

The protein resides in the secreted. In terms of biological role, snake venom serine protease with strong beta-fibrinogenolytic activities, angiotensin I (AGT)-degrading activities and strong kallikrein-like activities in vitro, releasing bradykinin from kininogen (KNG1). Intravenous injection mildly lowers blood pressure in experimental rats, which may be explained by the action on angiotensin I and kininogen. Exhibits amidase activity against N-benzoyl-Pro-Phe-Arg-p-nitroanilide in vitro. The polypeptide is Beta-fibrinogenase mucrofibrase-5 (Protobothrops mucrosquamatus (Taiwan habu)).